A 739-amino-acid polypeptide reads, in one-letter code: MFKADLGRIGIQLHTTYSRRIRKVKVMDNRKEPPFFNEDNVGPFYFKLPFYDTMELFIETLTGTCFELRVSPFEAVISVKGKIQRLEGIPICQQHLIWNNMELEDDYCLNDYNISEGCTLKLVLAMRGGPISTRKVPVEDPLRELAEYMDSSRDEVWEKTSCNKQVTFLVYREGDQLNFFRVVDRGDGTLTPLSESLSGSVYNLYTDEDEEAEPSPSGQQIIENSITMNKMKLLKAKMENMNLSKKPKKVVKVKPRPPLAPRPTSSSTAAARHRLLRVLPHIGQSCLPSGNAHLPETSRNAGPSPAAQAPADRPVSSLRNELLKDDDNWEINMLSHSTSSIRLLPQLTHIELESDKELADSVLHLGSSLSRRTKHLSGNLLSNNEDDVVLFPRSEECVADELLLPEVGAFAPFAEGTGAEQSSGVEGLGKVTPEFPLTKGDGGLRAAEQPLSHVARVLSSEPGDNAVLNHREPSSHKNRLLSPLLCAAPVSLHNSLVKPQRQSKCFESGNPSASTSQNTLRELDIRTIADSSFSRTARFRGVKVDSPGKRSDIISKVEARDITEMANKASKEPVGCVNNNGFLASLARSASRDSLQSTHGACRLRSSGIGLSTNFQHFQDENIRKSSPQSEPTDFFLSARGIGMSGSNAAAGKRIGESIHHLPPVKAPLQTKKKIMKHCFLCGKKTGLATSFECRCGNNFCASHRYAEAHGCTYDYKSAGRRYLEEANPVVNAPKLPKI.

One can recognise a Ubiquitin-like domain in the interval 54-129 (MELFIETLTG…LKLVLAMRGG (76 aa)). A compositionally biased stretch (basic residues) spans 246-255 (KPKKVVKVKP). 2 disordered regions span residues 246–270 (KPKK…STAA) and 287–316 (LPSG…RPVS). The AN1-type zinc finger occupies 673 to 720 (KKIMKHCFLCGKKTGLATSFECRCGNNFCASHRYAEAHGCTYDYKSAG). Residues C679, C682, C694, C696, C701, H704, H710, and C712 each coordinate Zn(2+).

This is AN1-type zinc finger protein 4 (Zfand4) from Mus musculus (Mouse).